A 160-amino-acid chain; its full sequence is Regulatory protein RecX (160 aa).

This sequence belongs to the RecX family.

It is found in the cytoplasm. In terms of biological role, modulates RecA activity. In Pelodictyon phaeoclathratiforme (strain DSM 5477 / BU-1), this protein is Regulatory protein RecX.